A 69-amino-acid polypeptide reads, in one-letter code: Large ribosomal subunit protein bL31 (69 aa).

Residues Cys-16, Cys-18, Cys-36, and Cys-39 each coordinate Zn(2+).

The protein belongs to the bacterial ribosomal protein bL31 family. Type A subfamily. Part of the 50S ribosomal subunit. The cofactor is Zn(2+).

Binds the 23S rRNA. This is Large ribosomal subunit protein bL31 from Thermosipho africanus (strain TCF52B).